We begin with the raw amino-acid sequence, 351 residues long: MTIAVGRAPERGWFDVLDDWLKRDRFVFVGWSGLLLFPCAYLALGGWLTGTTFVTSWYTHGLASSYLEGCNFLTVAVSSPANAFGHSLLFLWGPEAQGDFTRWCQIGGLWTFTALHGAFGLIGFMLRQFEIARLVGIRPYNAIAFSAPIAVFVSVFLMYPLGQSSWFFGPSFGVAGIFRFILFLQGFHNWTLNPFHMMGVAGVLGGALLCAIHGATVENTLFEDGEQANTFRAFEPTQAEETYSMVTANRFWSQIFGIAFSNKRWLHFFMLFVPVTGLWMSAIGIVGLALNLRAYDFVSQELRAAEDPEFETFYTKNILLNEGLRAWMAPQDQPHQNFVFPEEVLPRGNAL.

Residues 39 to 59 (CAYLALGGWLTGTTFVTSWYT) traverse the membrane as a helical segment. Position 116 (H116) interacts with chlorophyll a. A helical membrane pass occupies residues 123 to 139 (GFMLRQFEIARLVGIRP). 2 residues coordinate pheophytin a: Q128 and N141. Residues 151–164 (VFVSVFLMYPLGQS) form a helical membrane-spanning segment. H196 is a chlorophyll a binding site. A helical membrane pass occupies residues 206–226 (GALLCAIHGATVENTLFEDGE). Residues H213 and F260 each coordinate a plastoquinone. H213 contributes to the Fe cation binding site. Residue H267 participates in Fe cation binding. Residues 277-293 (GLWMSAIGIVGLALNLR) traverse the membrane as a helical segment.

It belongs to the reaction center PufL/M/PsbA/D family. In terms of assembly, PSII is composed of 1 copy each of membrane proteins PsbA, PsbB, PsbC, PsbD, PsbE, PsbF, PsbH, PsbI, PsbJ, PsbK, PsbL, PsbM, PsbT, PsbX, PsbY, PsbZ, Psb30/Ycf12, peripheral proteins PsbO, CyanoQ (PsbQ), PsbU, PsbV and a large number of cofactors. It forms dimeric complexes. The D1/D2 heterodimer binds P680, chlorophylls that are the primary electron donor of PSII, and subsequent electron acceptors. It shares a non-heme iron and each subunit binds pheophytin, quinone, additional chlorophylls, carotenoids and lipids. There is also a Cl(-1) ion associated with D1 and D2, which is required for oxygen evolution. The PSII complex binds additional chlorophylls, carotenoids and specific lipids. serves as cofactor.

The protein resides in the cellular thylakoid membrane. The enzyme catalyses 2 a plastoquinone + 4 hnu + 2 H2O = 2 a plastoquinol + O2. In terms of biological role, photosystem II (PSII) is a light-driven water:plastoquinone oxidoreductase that uses light energy to abstract electrons from H(2)O, generating O(2) and a proton gradient subsequently used for ATP formation. It consists of a core antenna complex that captures photons, and an electron transfer chain that converts photonic excitation into a charge separation. The D1/D2 (PsbA/PsbD) reaction center heterodimer binds P680, the primary electron donor of PSII as well as several subsequent electron acceptors. D2 is needed for assembly of a stable PSII complex. The polypeptide is Photosystem II D2 protein (Crocosphaera subtropica (strain ATCC 51142 / BH68) (Cyanothece sp. (strain ATCC 51142))).